The sequence spans 410 residues: MAKKKEFRQAEVNIGMVGHVDHGKTTLTKALTGIWTDTHSEELRRGITIKIGFADAEIRKCPSCGRYSTSPICPYCGHETEFERRVSFIDAPGHEALMTTMLAGASLMDGAVLVIAANEGVMPQTREHLMALQIVGNKNIVIALNKIELVDREKVIERYQEIKEFVKGTVAENAPIIPISALHGANVDVLLAAIEEFIPTPEHDPNKPPKMLVLRSFDVNKPGTKPEKLVGGVIGGSIVQGKLKVGDEIEIRPGVPYEEHGRIKYEPITTEIVSLQAGGRFVEEAYPGGLVGVGTKLDPYLTKGDLMAGNVVGKPGQLPPVWDELRLEVHLLERVVGTEEELKVEPIKRREVLLLNVGTARTMGLVTGLGKDEIELKLQIPICAEVGDRVAISRQVGSRWRLIGYGFIRE.

Positions 9-202 (QAEVNIGMVG…AIEEFIPTPE (194 aa)) constitute a tr-type G domain. A G1 region spans residues 18–25 (GHVDHGKT). Residues D21, T25, G46, and T48 each coordinate Mg(2+). 21–26 (DHGKTT) lines the GTP pocket. The interval 46 to 50 (GITIK) is G2. The Zn(2+) site is built by C61, C64, C73, and C76. The tract at residues 90–93 (DAPG) is G3. Residues 145 to 148 (NKIE) and 180 to 182 (SAL) contribute to the GTP site. The G4 stretch occupies residues 145–148 (NKIE). The interval 180–182 (SAL) is G5.

Belongs to the TRAFAC class translation factor GTPase superfamily. Classic translation factor GTPase family. EIF2G subfamily. Heterotrimer composed of an alpha, a beta and a gamma chain. Mg(2+) is required as a cofactor.

The catalysed reaction is GTP + H2O = GDP + phosphate + H(+). In terms of biological role, eIF-2 functions in the early steps of protein synthesis by forming a ternary complex with GTP and initiator tRNA. In Thermococcus onnurineus (strain NA1), this protein is Translation initiation factor 2 subunit gamma.